Here is a 194-residue protein sequence, read N- to C-terminus: Large ribosomal subunit protein bL25 (194 aa).

This sequence belongs to the bacterial ribosomal protein bL25 family. CTC subfamily. In terms of assembly, part of the 50S ribosomal subunit; part of the 5S rRNA/L5/L18/L25 subcomplex. Contacts the 5S rRNA. Binds to the 5S rRNA independently of L5 and L18.

This is one of the proteins that binds to the 5S RNA in the ribosome where it forms part of the central protuberance. The chain is Large ribosomal subunit protein bL25 from Geobacter sulfurreducens (strain ATCC 51573 / DSM 12127 / PCA).